A 262-amino-acid polypeptide reads, in one-letter code: Carboxy-S-adenosyl-L-methionine synthase (262 aa).

S-adenosyl-L-methionine is bound by residues Tyr-50, 84-86, 137-138, Asn-152, and Arg-219; these read GCS and DI.

This sequence belongs to the class I-like SAM-binding methyltransferase superfamily. Cx-SAM synthase family. In terms of assembly, homodimer.

It catalyses the reaction prephenate + S-adenosyl-L-methionine = carboxy-S-adenosyl-L-methionine + 3-phenylpyruvate + H2O. In terms of biological role, catalyzes the conversion of S-adenosyl-L-methionine (SAM) to carboxy-S-adenosyl-L-methionine (Cx-SAM). This is Carboxy-S-adenosyl-L-methionine synthase from Psychrobacter arcticus (strain DSM 17307 / VKM B-2377 / 273-4).